Here is a 216-residue protein sequence, read N- to C-terminus: Ribosomal RNA small subunit methyltransferase G (216 aa).

S-adenosyl-L-methionine is bound by residues Gly82, Leu87, 135-136 (AE), and Arg148.

It belongs to the methyltransferase superfamily. RNA methyltransferase RsmG family.

Its subcellular location is the cytoplasm. It carries out the reaction guanosine(527) in 16S rRNA + S-adenosyl-L-methionine = N(7)-methylguanosine(527) in 16S rRNA + S-adenosyl-L-homocysteine. Its function is as follows. Specifically methylates the N7 position of guanine in position 527 of 16S rRNA. The protein is Ribosomal RNA small subunit methyltransferase G of Caulobacter vibrioides (strain ATCC 19089 / CIP 103742 / CB 15) (Caulobacter crescentus).